We begin with the raw amino-acid sequence, 960 residues long: FYVE, RhoGEF and PH domain-containing protein 1 (960 aa).

Disordered stretches follow at residues 1 to 210 (MHGH…SSAA) and 226 to 355 (ASDR…REIP). A Phosphoserine modification is found at S48. Basic and acidic residues predominate over residues 125 to 135 (PHPEGPQRLRS). Composition is skewed to pro residues over residues 137–149 (PGPPTEIPGPRPS), 156–165 (GPKPQVPPKP), and 173–190 (VLPPPEPIPPPPSRPLPA). An SH3-binding motif is present at residues 171–187 (PRVLPPPEPIPPPPSRP). The residue at position 205 (S205) is a Phosphoserine. Positions 231 to 251 (APGPCPVPPEPAMLPQPPPQP) are enriched in pro residues. Over residues 273–284 (RDGEKVPNRDSG) the composition is skewed to basic and acidic residues. Low complexity predominate over residues 285–294 (IDSISSPSNS). Over residues 335-350 (VDSDLEEEEEEEEEEK) the composition is skewed to acidic residues. Positions 372 to 560 (KVFHIANELL…ATAAEHSNAA (189 aa)) constitute a DH domain. The 100-residue stretch at 589–688 (ELIKEGHILK…WVQAINSTLL (100 aa)) folds into the PH 1 domain. A disordered region spans residues 701 to 725 (NSTNRDDEDTPPNSPNVDLGKRAPT). T710 is modified (phosphothreonine). The residue at position 714 (S714) is a Phosphoserine. Residues 729–789 (EKEVTMCMRC…VCTDCYVALH (61 aa)) form an FYVE-type zinc finger. Residues C735, C738, C752, C755, C760, C763, C781, and C784 each coordinate Zn(2+). The region spanning 820–920 (NSVICSFLHY…WMAVLGRAGR (101 aa)) is the PH 2 domain. A disordered region spans residues 922–960 (DTFCPGPTLSEDKEMEETPVAASGATAEPPEASQTRDKT).

Interacts with DBNL/ABP1 and CTTN. Binds CDC42. May interact with CCPG1.

It localises to the cytoplasm. It is found in the cell projection. The protein localises to the lamellipodium. Its subcellular location is the ruffle. The protein resides in the cytoskeleton. Functionally, activates CDC42, a member of the Ras-like family of Rho- and Rac proteins, by exchanging bound GDP for free GTP. Plays a role in regulating the actin cytoskeleton and cell shape. This Mus musculus (Mouse) protein is FYVE, RhoGEF and PH domain-containing protein 1 (Fgd1).